The sequence spans 4841 residues: Nonribosomal peptide synthetase 2 (4841 aa).

The segment at 26–429 (VKPPNQNVAL…GRLSDGQVKL (404 aa)) is adenylation 1. In terms of domain architecture, Carrier 1 spans 531–604 (EPVDEFESSL…DIIFAARRQI (74 aa)). Ser565 carries the O-(pantetheine 4'-phosphoryl)serine modification. Residues 640–1042 (EEIIPCTPLQ…ILERPTQEIK (403 aa)) form a condensation 1 region. Residues 1072-1463 (FEDVVRKHPE…GRIDDQVKLR (392 aa)) are adenylation 2. The Carrier 2 domain maps to 1587–1665 (EGDWSRMDLV…QLAKHLEGKP (79 aa)). Ser1625 is modified (O-(pantetheine 4'-phosphoryl)serine). The segment at 1702 to 2043 (ILPCTPLQEA…QTVWELEADS (342 aa)) is condensation 2. Positions 2139 to 2212 (SEVELDVRQV…KIAAKLLENR (74 aa)) constitute a Carrier 3 domain. Ser2173 carries the O-(pantetheine 4'-phosphoryl)serine modification. The interval 2248 to 2663 (AVLPCTPLQS…NHLATEDEAF (416 aa)) is condensation 3. Positions 2695–3090 (AAVHPNKLAL…GRADDQVKLR (396 aa)) are adenylation 3. The Carrier 4 domain maps to 3219–3293 (QDILVLLYDA…DLANCLAKAA (75 aa)). Ser3253 is subject to O-(pantetheine 4'-phosphoryl)serine. A condensation 4 region spans residues 3333 to 3735 (IAPCSPLQEG…DLAAESPQSE (403 aa)). Positions 3759 to 3838 (QNSFEWTSEA…KMITELASIT (80 aa)) constitute a Carrier 5 domain. An O-(pantetheine 4'-phosphoryl)serine modification is found at Ser3799. Positions 3873–4242 (SVLPPTHLQE…VEAEAVSDSL (370 aa)) are condensation 5. Positions 4318-4394 (IEWNQNEIGI…EMAQKADTKL (77 aa)) constitute a Carrier 6 domain. Ser4355 carries the O-(pantetheine 4'-phosphoryl)serine modification. Residues 4430–4726 (EVLPALPMQV…DIHLITSESR (297 aa)) are condensation 6.

It belongs to the NRP synthetase family.

The protein operates within siderophore biosynthesis. Nonribosomal peptide synthetase; part of the gene cluster that mediates the biosynthesis of hydroxamate-containing siderophores that play a critical role in virulence. Gibberella zeae produces extracellular coprogen-type siderophores as well as the intracellular siderophore ferricrocin. The role of extracellular siderophores is to supply iron to the fungus during plant infection, and the intracellular ferricrocin is required for intracellular iron distribution and storage with a crucial role in ascus and ascospore development. SID1 catalyzes the conversion of L-ornithine to N(5)-hydroxyornithine, the first step in the biosynthesis of all hydroxamate-containing siderophores. The assembly of extracellular coprogen-type siderophores is performed by the nonribosomal peptide synthetase (NRPS) NPS6 whereas the intracellular siderophore ferricrocin is assembled by NPS2. The sequence is that of Nonribosomal peptide synthetase 2 from Gibberella zeae (strain ATCC MYA-4620 / CBS 123657 / FGSC 9075 / NRRL 31084 / PH-1) (Wheat head blight fungus).